Consider the following 113-residue polypeptide: UPF0122 protein MGAS10270_Spy1030 (113 aa).

The protein belongs to the UPF0122 family.

Its function is as follows. Might take part in the signal recognition particle (SRP) pathway. This is inferred from the conservation of its genetic proximity to ftsY/ffh. May be a regulatory protein. The polypeptide is UPF0122 protein MGAS10270_Spy1030 (Streptococcus pyogenes serotype M2 (strain MGAS10270)).